We begin with the raw amino-acid sequence, 492 residues long: NADH-quinone oxidoreductase subunit N (492 aa).

A run of 14 helical transmembrane segments spans residues 12-32 (LLPY…MIAI), 44-64 (ISVV…AGII), 76-96 (LFVI…CALA), 115-135 (LYLL…AQHL), 138-158 (FFMS…YTYM), 169-189 (YLVL…FIYA), 212-232 (LILG…AAPF), 244-264 (PAPI…ALAV), 272-292 (LLAL…SILL), 306-326 (LLGY…VSIG), 334-354 (SMYM…VTLM), 381-401 (TAVM…AGFI), 416-438 (WFLA…RVLL), and 463-483 (IMVI…NSMI).

This sequence belongs to the complex I subunit 2 family. NDH-1 is composed of 14 different subunits. Subunits NuoA, H, J, K, L, M, N constitute the membrane sector of the complex.

It is found in the cell inner membrane. It catalyses the reaction a quinone + NADH + 5 H(+)(in) = a quinol + NAD(+) + 4 H(+)(out). In terms of biological role, NDH-1 shuttles electrons from NADH, via FMN and iron-sulfur (Fe-S) centers, to quinones in the respiratory chain. The immediate electron acceptor for the enzyme in this species is believed to be ubiquinone. Couples the redox reaction to proton translocation (for every two electrons transferred, four hydrogen ions are translocated across the cytoplasmic membrane), and thus conserves the redox energy in a proton gradient. The protein is NADH-quinone oxidoreductase subunit N of Psychrobacter arcticus (strain DSM 17307 / VKM B-2377 / 273-4).